Reading from the N-terminus, the 481-residue chain is Zinc finger CCCH domain-containing protein 4 (481 aa).

Residues 157-184 (RNRAHVCSFFIRGECTRGAECPYRHEMP) form a C3H1-type zinc finger. One can recognise an RRM domain in the interval 228-301 (KTLYVGGLNS…QRLKLTWGRP (74 aa)). Positions 329-481 (HNQPPPMQQY…DVSTATGSSQ (153 aa)) are disordered. The span at 331–345 (QPPPMQQYYMHPPPA) shows a compositional bias: pro residues. 2 stretches are compositionally biased toward low complexity: residues 369–389 (AGGSSTENNGASSSSYMMPPH) and 399–410 (YMPSPYQQQYPP). The segment covering 423–444 (APPPAAYPYPQQPGPGSRPAPS) has biased composition (pro residues). The span at 449–471 (SAISPDSAPAGSGAPSGSSQQAP) shows a compositional bias: low complexity. Residues 472–481 (DVSTATGSSQ) show a composition bias toward polar residues.

This is Zinc finger CCCH domain-containing protein 4 from Arabidopsis thaliana (Mouse-ear cress).